The primary structure comprises 401 residues: All trans-polyprenyl-diphosphate synthase PDSS2 (401 aa).

Belongs to the FPP/GGPP synthase family. In terms of assembly, heterotetramer composed of 2 PDSS1/DPS1 and 2 PDSS2/DLP1 subunits.

The protein resides in the mitochondrion. It catalyses the reaction 7 isopentenyl diphosphate + (2E,6E)-farnesyl diphosphate = all-trans-decaprenyl diphosphate + 7 diphosphate. It carries out the reaction 6 isopentenyl diphosphate + (2E,6E)-farnesyl diphosphate = all-trans-nonaprenyl diphosphate + 6 diphosphate. The protein operates within cofactor biosynthesis; ubiquinone biosynthesis. In terms of biological role, heterotetrameric enzyme that catalyzes the condensation of farnesyl diphosphate (FPP), which acts as a primer, and isopentenyl diphosphate (IPP) to produce prenyl diphosphates of varying chain lengths and participates in the determination of the side chain of ubiquinone. Supplies nona and decaprenyl diphosphate, the precursors for the side chain of the isoprenoid quinones ubiquinone-9 (Q9) and ubiquinone-10 (Q10) respectively. The enzyme adds isopentenyl diphosphate molecules sequentially to farnesyl diphosphate with trans stereochemistry. May play a role during cerebellar development. May regulate mitochondrial respiratory chain function. The sequence is that of All trans-polyprenyl-diphosphate synthase PDSS2 from Rattus norvegicus (Rat).